The primary structure comprises 362 residues: MKTLHVQTASSSYPVFIGQGIRKKACELLTSLNRPLTRIMFVTDEEVDRLYGDEMLHLLQEKWPVKKVTVPSGEQAKSMDMYTKLQSEAIRFHMDRSSCIIAFGGGVVGDLAGFVAATFMRGIDFIQMPTTLLAHDSAVGGKVAVNHPLGKNLIGAFYQPKAVLYDTDFLRSLPEKELRSGMAEVIKHAFIYDRAFLEELLNIHSLRDITNDQLNDMIFKGISIKASVVQQDEKEEGIRAYLNFGHTLGHAVEAEYGYGQITHGDAVALGMQFALYISEKTVGCEMDRKRLVSWLKSLGYPSQIRKETETSVLLNRMMNDKKTRGGKIQFIVLNELGKVADHTFSRNELESWLNKWRLEETS.

Residues 72–77 (SGEQAK), 106–110 (GVVGD), 130–131 (TT), Lys-142, and Lys-151 each bind NAD(+). Zn(2+) contacts are provided by Glu-184, His-246, and His-263.

This sequence belongs to the sugar phosphate cyclases superfamily. Dehydroquinate synthase family. NAD(+) is required as a cofactor. Requires Co(2+) as cofactor. Zn(2+) serves as cofactor.

It is found in the cytoplasm. The catalysed reaction is 7-phospho-2-dehydro-3-deoxy-D-arabino-heptonate = 3-dehydroquinate + phosphate. The protein operates within metabolic intermediate biosynthesis; chorismate biosynthesis; chorismate from D-erythrose 4-phosphate and phosphoenolpyruvate: step 2/7. Its function is as follows. Catalyzes the conversion of 3-deoxy-D-arabino-heptulosonate 7-phosphate (DAHP) to dehydroquinate (DHQ). This is 3-dehydroquinate synthase from Bacillus subtilis (strain 168).